The sequence spans 288 residues: Acetyl-coenzyme A carboxylase carboxyl transferase subunit beta (288 aa).

The 257-residue stretch at 32–288 (LFAKCPACKH…LELHTEVENV (257 aa)) folds into the CoA carboxyltransferase N-terminal domain. Zn(2+) contacts are provided by Cys36, Cys39, Cys54, and Cys57. The segment at 36–57 (CPACKHTIYQKDLGKNKVCPNC) adopts a C4-type zinc-finger fold.

Belongs to the AccD/PCCB family. In terms of assembly, acetyl-CoA carboxylase is a heterohexamer composed of biotin carboxyl carrier protein (AccB), biotin carboxylase (AccC) and two subunits each of ACCase subunit alpha (AccA) and ACCase subunit beta (AccD). Zn(2+) serves as cofactor.

It localises to the cytoplasm. It catalyses the reaction N(6)-carboxybiotinyl-L-lysyl-[protein] + acetyl-CoA = N(6)-biotinyl-L-lysyl-[protein] + malonyl-CoA. Its pathway is lipid metabolism; malonyl-CoA biosynthesis; malonyl-CoA from acetyl-CoA: step 1/1. In terms of biological role, component of the acetyl coenzyme A carboxylase (ACC) complex. Biotin carboxylase (BC) catalyzes the carboxylation of biotin on its carrier protein (BCCP) and then the CO(2) group is transferred by the transcarboxylase to acetyl-CoA to form malonyl-CoA. The chain is Acetyl-coenzyme A carboxylase carboxyl transferase subunit beta from Lactococcus lactis subsp. lactis (strain IL1403) (Streptococcus lactis).